The primary structure comprises 292 residues: Glycine--tRNA ligase alpha subunit (292 aa).

The protein belongs to the class-II aminoacyl-tRNA synthetase family. As to quaternary structure, tetramer of two alpha and two beta subunits.

The protein resides in the cytoplasm. The enzyme catalyses tRNA(Gly) + glycine + ATP = glycyl-tRNA(Gly) + AMP + diphosphate. The chain is Glycine--tRNA ligase alpha subunit from Geobacter sulfurreducens (strain ATCC 51573 / DSM 12127 / PCA).